Consider the following 194-residue polypeptide: HTH-type transcriptional regulator BetI (194 aa).

The HTH tetR-type domain maps to 8–68 (PLRRRELIDA…ATMRHLLREL (61 aa)). The H-T-H motif DNA-binding region spans 31–50 (TVAQIAHEAGVSPALAHHYF).

Its pathway is amine and polyamine biosynthesis; betaine biosynthesis via choline pathway [regulation]. In terms of biological role, repressor involved in the biosynthesis of the osmoprotectant glycine betaine. It represses transcription of the choline transporter BetT and the genes of BetAB involved in the synthesis of glycine betaine. This is HTH-type transcriptional regulator BetI from Brucella anthropi (strain ATCC 49188 / DSM 6882 / CCUG 24695 / JCM 21032 / LMG 3331 / NBRC 15819 / NCTC 12168 / Alc 37) (Ochrobactrum anthropi).